A 550-amino-acid chain; its full sequence is Arginine--tRNA ligase (550 aa).

Residues Ala130–Gly140 carry the 'HIGH' region motif.

It belongs to the class-I aminoacyl-tRNA synthetase family. Monomer.

Its subcellular location is the cytoplasm. It catalyses the reaction tRNA(Arg) + L-arginine + ATP = L-arginyl-tRNA(Arg) + AMP + diphosphate. In Mycobacterium leprae (strain TN), this protein is Arginine--tRNA ligase (argS).